We begin with the raw amino-acid sequence, 177 residues long: Transcriptional repressor NrdR (177 aa).

The segment at 3–34 (CLFCQHTDTRVIDSRVSEDGATIRRRRECEAC) is a zinc-finger region. One can recognise an ATP-cone domain in the interval 49-139 (PVIIKKDGGR…VYRSFQDVAD (91 aa)).

The protein belongs to the NrdR family. Zn(2+) is required as a cofactor.

Its function is as follows. Negatively regulates transcription of bacterial ribonucleotide reductase nrd genes and operons by binding to NrdR-boxes. This is Transcriptional repressor NrdR from Xylella fastidiosa (strain M23).